The following is a 361-amino-acid chain: Histidinol-phosphate aminotransferase (361 aa).

Position 216 is an N6-(pyridoxal phosphate)lysine (Lys216).

This sequence belongs to the class-II pyridoxal-phosphate-dependent aminotransferase family. Histidinol-phosphate aminotransferase subfamily. In terms of assembly, homodimer. Requires pyridoxal 5'-phosphate as cofactor.

The enzyme catalyses L-histidinol phosphate + 2-oxoglutarate = 3-(imidazol-4-yl)-2-oxopropyl phosphate + L-glutamate. Its pathway is amino-acid biosynthesis; L-histidine biosynthesis; L-histidine from 5-phospho-alpha-D-ribose 1-diphosphate: step 7/9. The chain is Histidinol-phosphate aminotransferase from Francisella philomiragia subsp. philomiragia (strain ATCC 25017 / CCUG 19701 / FSC 153 / O#319-036).